Reading from the N-terminus, the 377-residue chain is Actin depolymerising venom protein gelsolin 1 (377 aa).

The first 26 residues, 1–26, serve as a signal peptide directing secretion; the sequence is MFRQMKLGSLATKLLLACFLVTCTSG. Gelsolin-like repeat units follow at residues 50–133, 174–243, and 298–368; these read FVPV…SEQF, IRVR…SSTS, and EKPL…PTAF.

As to expression, expressed by the venom gland (posterior main gland) (at protein level).

It localises to the secreted. The protein is Actin depolymerising venom protein gelsolin 1 of Platymeris rhadamanthus (Red spot assassin bug).